The chain runs to 569 residues: Cryptochrome DASH, chloroplastic/mitochondrial (569 aa).

The Photolyase/cryptochrome alpha/beta domain occupies 84–221 (GVTILWFRND…KLELIWGSTM (138 aa)). Residues Y316 and 329–333 (STKFS) contribute to the FAD site. R436 is an ATP binding site. 2 residues coordinate FAD: D466 and D468. D485 is an ATP binding site. Residues 541–569 (GNGPMAGGSKSGGGFRGSHSGRRSRHNGP) form a disordered region. Over residues 544–556 (PMAGGSKSGGGFR) the composition is skewed to gly residues. The span at 559-569 (HSGRRSRHNGP) shows a compositional bias: basic residues.

This sequence belongs to the DNA photolyase class-1 family. As to quaternary structure, homodimer. FAD serves as cofactor. (6R)-5,10-methylene-5,6,7,8-tetrahydrofolate is required as a cofactor.

Its subcellular location is the plastid. The protein resides in the chloroplast. It is found in the mitochondrion. Functionally, may have a photoreceptor function. Binds ss- and ds-DNA in a sequence non-specific manner. Has a photolyase activity specific for cyclobutane pyrimidine dimers in ssDNA. The polypeptide is Cryptochrome DASH, chloroplastic/mitochondrial (CRYD) (Arabidopsis thaliana (Mouse-ear cress)).